The following is a 122-amino-acid chain: Large ribosomal subunit protein uL14 (122 aa).

Belongs to the universal ribosomal protein uL14 family. Part of the 50S ribosomal subunit. Forms a cluster with proteins L3 and L19. In the 70S ribosome, L14 and L19 interact and together make contacts with the 16S rRNA in bridges B5 and B8.

In terms of biological role, binds to 23S rRNA. Forms part of two intersubunit bridges in the 70S ribosome. This chain is Large ribosomal subunit protein uL14, found in Picosynechococcus sp. (strain ATCC 27264 / PCC 7002 / PR-6) (Agmenellum quadruplicatum).